Reading from the N-terminus, the 605-residue chain is Golgi-associated RAB2 interactor protein 3 (605 aa).

Disordered regions lie at residues Gly-234–Thr-265 and Tyr-407–Lys-529. Residues His-239–Thr-265 show a composition bias toward low complexity. Basic residues predominate over residues Lys-434 to Ala-457. Positions Arg-441–Gly-458 match the Bipartite nuclear localization signal motif. Residues Lys-463–His-473 show a composition bias toward polar residues. Basic and acidic residues predominate over residues Asn-475–Gly-484. Residues Arg-489–Ser-500 are compositionally biased toward basic residues. The segment covering Gln-513–Ala-526 has biased composition (polar residues). Ser-592 is subject to Phosphoserine.

It belongs to the GARIN family. Interacts (via N-terminus) with RAB2B (in GTP-bound form). Interacts with FRG1. As to expression, expressed in adult spermatocytes and spermatids (at protein level).

The protein localises to the golgi apparatus. It is found in the nucleus. It localises to the cajal body. Functionally, may be involved in RNA biogenesis. The polypeptide is Golgi-associated RAB2 interactor protein 3 (Homo sapiens (Human)).